Here is a 590-residue protein sequence, read N- to C-terminus: Melanophilin (590 aa).

The RabBD domain maps to 4–124 (RLDLSTLTDE…IGSLEWYYQH (121 aa)). The FYVE-type zinc finger occupies 64–107 (CARCLQPYRLLLNSRRQCLECSLFVCKSCSHAHPEEQGWLCDPC). Disordered stretches follow at residues 147–182 (GGGG…PLNS), 215–276 (SVPE…AELD), 311–335 (DTSD…ARTV), 361–472 (VLPP…SEIS), and 485–590 (GLTV…AQQP). Over residues 154–172 (SLEEGNGDSEQTDEDGDLD) the composition is skewed to acidic residues. Residues 215–238 (SVPESAHSLQSLSGEPYSEDTTSL) are compositionally biased toward polar residues. Positions 339–485 (QILELNKRMS…SRIAALRAAG (147 aa)) form a coiled coil. Residues 391 to 401 (LTSNISGSSTS) are compositionally biased toward low complexity. The segment covering 424–433 (GHMETQERNP) has biased composition (basic and acidic residues).

As to quaternary structure, binds RAB27A that has been activated by GTP-binding via its N-terminus. Binds MYO5A via its C-terminal coiled coil domain. As to expression, highly expressed in embryos at day 7; not detectable at day 11. Highly expressed in adult stomach; detected at lower levels in kidney, lung, skin and small intestine. Detected in melanocytes.

Its subcellular location is the melanosome. In terms of biological role, rab effector protein involved in melanosome transport. Serves as link between melanosome-bound RAB27A and the motor protein MYO5A. The polypeptide is Melanophilin (Mlph) (Mus musculus (Mouse)).